Consider the following 407-residue polypeptide: Probable tRNA sulfurtransferase (407 aa).

The THUMP domain occupies 61–165 (NEIIQRLSKV…MDAIYIYEKV (105 aa)). ATP-binding positions include 183–184 (ML), 208–209 (HF), R265, G287, and Q296.

Belongs to the ThiI family.

The protein resides in the cytoplasm. The enzyme catalyses [ThiI sulfur-carrier protein]-S-sulfanyl-L-cysteine + a uridine in tRNA + 2 reduced [2Fe-2S]-[ferredoxin] + ATP + H(+) = [ThiI sulfur-carrier protein]-L-cysteine + a 4-thiouridine in tRNA + 2 oxidized [2Fe-2S]-[ferredoxin] + AMP + diphosphate. The catalysed reaction is [ThiS sulfur-carrier protein]-C-terminal Gly-Gly-AMP + S-sulfanyl-L-cysteinyl-[cysteine desulfurase] + AH2 = [ThiS sulfur-carrier protein]-C-terminal-Gly-aminoethanethioate + L-cysteinyl-[cysteine desulfurase] + A + AMP + 2 H(+). The protein operates within cofactor biosynthesis; thiamine diphosphate biosynthesis. Catalyzes the ATP-dependent transfer of a sulfur to tRNA to produce 4-thiouridine in position 8 of tRNAs, which functions as a near-UV photosensor. Also catalyzes the transfer of sulfur to the sulfur carrier protein ThiS, forming ThiS-thiocarboxylate. This is a step in the synthesis of thiazole, in the thiamine biosynthesis pathway. The sulfur is donated as persulfide by IscS. The sequence is that of Probable tRNA sulfurtransferase from Staphylococcus epidermidis (strain ATCC 35984 / DSM 28319 / BCRC 17069 / CCUG 31568 / BM 3577 / RP62A).